The chain runs to 600 residues: Na(+)/dicarboxylate cotransporter 3 (600 aa).

Over M1–R16 the chain is Cytoplasmic. A helical membrane pass occupies residues L17–K37. Residues E38–E55 are Extracellular-facing. Residues A56–L76 traverse the membrane as a helical segment. At P77–C82 the chain is on the cytoplasmic side. A helical membrane pass occupies residues P83–I103. The Extracellular segment spans residues E104–F137. The chain crosses the membrane as a helical span at residues L138–I158. The Cytoplasmic segment spans residues L159–W229. A helical transmembrane segment spans residues K230–G250. Over T251–I278 the chain is Extracellular. A helical transmembrane segment spans residues F279 to Y299. Residues G300–I336 lie on the Cytoplasmic side of the membrane. A helical membrane pass occupies residues K337–R357. Over D358–G372 the chain is Extracellular. A helical transmembrane segment spans residues F373–Q393. The Cytoplasmic portion of the chain corresponds to K394–T422. Positions V423–E443 form an intramembrane region, helical. At S444–P461 the chain is on the cytoplasmic side. The chain crosses the membrane as a helical span at residues P462–N482. The Extracellular portion of the chain corresponds to T483–L505. Residues Y506 to P526 traverse the membrane as a helical segment. The Cytoplasmic segment spans residues P527–G546. Residues L547–T567 form a helical membrane-spanning segment. The Extracellular portion of the chain corresponds to I568–F600. 2 N-linked (GlcNAc...) asparagine glycosylation sites follow: N584 and N594.

It belongs to the SLC13A/DASS transporter (TC 2.A.47) family. NADC subfamily. Highly expressed in kidney, and at much lower levels in brain.

Its subcellular location is the cell membrane. It catalyses the reaction succinate(out) + 3 Na(+)(out) = succinate(in) + 3 Na(+)(in). The catalysed reaction is 2-oxoglutarate(out) + 3 Na(+)(out) = 2-oxoglutarate(in) + 3 Na(+)(in). The enzyme catalyses N-acetyl-L-aspartate(out) + 3 Na(+)(out) = N-acetyl-L-aspartate(in) + 3 Na(+)(in). It carries out the reaction fumarate(out) + 3 Na(+)(out) = fumarate(in) + 3 Na(+)(in). It catalyses the reaction glutarate(out) + 3 Na(+)(out) = glutarate(in) + 3 Na(+)(in). The catalysed reaction is 2,2-dimethylsuccinate(out) + 3 Na(+)(out) = 2,2-dimethylsuccinate(in) + 3 Na(+)(in). The enzyme catalyses 2,3-dimethylsuccinate(out) + 3 Na(+)(out) = 2,3-dimethylsuccinate(in) + 3 Na(+)(in). It carries out the reaction malate(out) + 3 Na(+)(out) = malate(in) + 3 Na(+)(in). It catalyses the reaction itaconate(out) + 3 Na(+)(out) = itaconate(in) + 3 Na(+)(in). High-affinity sodium-dicarboxylate cotransporter that accepts a range of substrates with 4-6 carbon atoms, such as the citric acid cycle intermediates succinate and alpha-ketoglutarate (2-oxoglutarate), as well as other compounds including N-acetyl-L-aspartate. Transports the dicarboxylate into the cell with a probable stoichiometry of 3 Na(+) for 1 divalent dicarboxylate, rendering the process electrogenic. Can transport citrate in a Na(+)-dependent manner, recognizing the divalent form of citrate rather than the trivalent form which is normally found in blood. Imports itaconate in hepatocytes leading to activation of TFEB-dependent lysosomal biogenesis involved in antibacterial innate immune response. The sequence is that of Na(+)/dicarboxylate cotransporter 3 (Slc13a3) from Mus musculus (Mouse).